The primary structure comprises 401 residues: Type 4 fimbrial assembly protein PilC (401 aa).

3 helical membrane passes run 166–186 (AMIY…VLLL), 215–235 (TGLG…AVAA), and 375–395 (IVLV…LPIF).

Belongs to the GSP F family.

It localises to the cell inner membrane. In terms of biological role, involved in the translocation of the type IV pilin (PilA). In Pseudomonas putida (Arthrobacter siderocapsulatus), this protein is Type 4 fimbrial assembly protein PilC (pilC).